The following is a 40-amino-acid chain: Muscarinic m1-toxin4 (40 aa).

Residues Cys3 and Cys24 are joined by a disulfide bond.

Belongs to the three-finger toxin family. Short-chain subfamily. Aminergic toxin sub-subfamily. In terms of assembly, monomer. In terms of processing, contains 4 disulfide bonds. Expressed by the venom gland.

It localises to the secreted. Its function is as follows. Binds irreversibly and specifically to M1 (CHRM1) muscarinic acetylcholine receptors, blocking further binding of antagonists and preventing the action of agonists. This is Muscarinic m1-toxin4 from Dendroaspis angusticeps (Eastern green mamba).